The primary structure comprises 179 residues: Large ribosomal subunit protein uL5 (179 aa).

It belongs to the universal ribosomal protein uL5 family. Part of the 50S ribosomal subunit; part of the 5S rRNA/L5/L18/L25 subcomplex. Contacts the 5S rRNA and the P site tRNA. Forms a bridge to the 30S subunit in the 70S ribosome.

Its function is as follows. This is one of the proteins that bind and probably mediate the attachment of the 5S RNA into the large ribosomal subunit, where it forms part of the central protuberance. In the 70S ribosome it contacts protein S13 of the 30S subunit (bridge B1b), connecting the 2 subunits; this bridge is implicated in subunit movement. Contacts the P site tRNA; the 5S rRNA and some of its associated proteins might help stabilize positioning of ribosome-bound tRNAs. The protein is Large ribosomal subunit protein uL5 of Histophilus somni (strain 129Pt) (Haemophilus somnus).